A 288-amino-acid chain; its full sequence is Diaminopimelate epimerase (288 aa).

Substrate-binding residues include asparagine 14 and asparagine 67. The Proton donor role is filled by cysteine 76. Substrate is bound by residues glycine 77–asparagine 78, asparagine 166, asparagine 199, and glutamate 217–arginine 218. Residue cysteine 226 is the Proton acceptor of the active site. Glycine 227–threonine 228 contacts substrate.

The protein belongs to the diaminopimelate epimerase family. Homodimer.

The protein localises to the cytoplasm. The enzyme catalyses (2S,6S)-2,6-diaminopimelate = meso-2,6-diaminopimelate. It functions in the pathway amino-acid biosynthesis; L-lysine biosynthesis via DAP pathway; DL-2,6-diaminopimelate from LL-2,6-diaminopimelate: step 1/1. Catalyzes the stereoinversion of LL-2,6-diaminopimelate (L,L-DAP) to meso-diaminopimelate (meso-DAP), a precursor of L-lysine and an essential component of the bacterial peptidoglycan. The sequence is that of Diaminopimelate epimerase from Bacillus anthracis (strain A0248).